The sequence spans 358 residues: NADH-quinone oxidoreductase subunit H (358 aa).

8 helical membrane passes run 20–40 (ITVG…IPLI), 95–115 (ALFY…WAVI), 128–148 (IGLL…IIAG), 168–188 (ISYE…SGSM), 206–226 (VFSW…ISAV), 253–273 (GFAF…IAAL), 295–315 (TPSA…YLWI), and 334–354 (VLIP…ISPL).

It belongs to the complex I subunit 1 family. NDH-1 is composed of 14 different subunits. Subunits NuoA, H, J, K, L, M, N constitute the membrane sector of the complex.

It localises to the cell inner membrane. It catalyses the reaction a quinone + NADH + 5 H(+)(in) = a quinol + NAD(+) + 4 H(+)(out). Functionally, NDH-1 shuttles electrons from NADH, via FMN and iron-sulfur (Fe-S) centers, to quinones in the respiratory chain. The immediate electron acceptor for the enzyme in this species is believed to be ubiquinone. Couples the redox reaction to proton translocation (for every two electrons transferred, four hydrogen ions are translocated across the cytoplasmic membrane), and thus conserves the redox energy in a proton gradient. This subunit may bind ubiquinone. The protein is NADH-quinone oxidoreductase subunit H of Neisseria gonorrhoeae (strain ATCC 700825 / FA 1090).